A 286-amino-acid chain; its full sequence is Bifunctional protein FolD (286 aa).

Residues Gly-166 to Ser-168, Ser-191, and Ile-232 each bind NADP(+).

The protein belongs to the tetrahydrofolate dehydrogenase/cyclohydrolase family. In terms of assembly, homodimer.

It catalyses the reaction (6R)-5,10-methylene-5,6,7,8-tetrahydrofolate + NADP(+) = (6R)-5,10-methenyltetrahydrofolate + NADPH. The enzyme catalyses (6R)-5,10-methenyltetrahydrofolate + H2O = (6R)-10-formyltetrahydrofolate + H(+). It participates in one-carbon metabolism; tetrahydrofolate interconversion. Its function is as follows. Catalyzes the oxidation of 5,10-methylenetetrahydrofolate to 5,10-methenyltetrahydrofolate and then the hydrolysis of 5,10-methenyltetrahydrofolate to 10-formyltetrahydrofolate. The sequence is that of Bifunctional protein FolD from Alkalilimnicola ehrlichii (strain ATCC BAA-1101 / DSM 17681 / MLHE-1).